The sequence spans 241 residues: Probable 2-phosphosulfolactate phosphatase (241 aa).

Belongs to the ComB family. The cofactor is Mg(2+).

It carries out the reaction (2R)-O-phospho-3-sulfolactate + H2O = (2R)-3-sulfolactate + phosphate. The sequence is that of Probable 2-phosphosulfolactate phosphatase from Deinococcus geothermalis (strain DSM 11300 / CIP 105573 / AG-3a).